A 359-amino-acid chain; its full sequence is DNA polymerase IV (359 aa).

A UmuC domain is found at 7 to 188 (IIHIDMDAFY…LPIGKFFGVG (182 aa)). Residues Asp11 and Asp106 each contribute to the Mg(2+) site. Glu107 is an active-site residue.

The protein belongs to the DNA polymerase type-Y family. In terms of assembly, monomer. It depends on Mg(2+) as a cofactor.

The protein resides in the cytoplasm. The enzyme catalyses DNA(n) + a 2'-deoxyribonucleoside 5'-triphosphate = DNA(n+1) + diphosphate. Poorly processive, error-prone DNA polymerase involved in untargeted mutagenesis. Copies undamaged DNA at stalled replication forks, which arise in vivo from mismatched or misaligned primer ends. These misaligned primers can be extended by PolIV. Exhibits no 3'-5' exonuclease (proofreading) activity. May be involved in translesional synthesis, in conjunction with the beta clamp from PolIII. The protein is DNA polymerase IV of Clostridium perfringens (strain 13 / Type A).